A 181-amino-acid chain; its full sequence is Regulator of G-protein signaling 10 (181 aa).

The tract at residues 1–35 (MFTRAVSRLSRKRPPSDIHDGDGSSSSGHQSLKST) is disordered. Phosphoserine occurs at positions 24 and 41. The RGS domain maps to 41-156 (SLENLLEDPE…LKSDLFLKHR (116 aa)). Cysteine 74 carries the S-palmitoyl cysteine lipid modification. Residues 157-181 (RTEEEEEDPPDAQTAAKRASRIYNT) are disordered. Position 176 is a phosphoserine (serine 176).

As to quaternary structure, interacts with GNAZ, GNAI1 and GNAI3. Associates specifically with the activated, GTP-bound forms of GNAZ and GNAI3.

The protein resides in the cytoplasm. Its subcellular location is the cytosol. The protein localises to the nucleus. Regulates G protein-coupled receptor signaling cascades, including signaling downstream of the muscarinic acetylcholine receptor CHRM2. Inhibits signal transduction by increasing the GTPase activity of G protein alpha subunits, thereby driving them into their inactive GDP-bound form. Modulates the activity of potassium channels that are activated in response to CHRM2 signaling. Activity on GNAZ is inhibited by palmitoylation of the G-protein. This is Regulator of G-protein signaling 10 (Rgs10) from Rattus norvegicus (Rat).